Reading from the N-terminus, the 312-residue chain is MDRMDSSDEEIDNISDDELQSGDEIEVESSNSPLRLNYILGNEIGRGAFSIVREATSRATGTKVAIKSINTRFIKNKLLMREIEIMKKVGDHPNILKLYEVYETTKHLHLVLELVTGGELFDKIVQRGEYSEQDASKIVRQIVSAVGHLHANGIAHRDLKPQNLLCAGEEGDDIRVADFGLSKIFGDGDYLETCCGSPEYVAPEVLECKPYDKACDLWSVGVITYVLLTGCFPFWDKNNAVLYEKIRNVDYGWPEGLEVSNEAKDLVSHLIEKNPEKRFTFEQCLIHPWVTGEGVSNARKIKPFQQQQPNNR.

Positions 1–28 (MDRMDSSDEEIDNISDDELQSGDEIEVE) are disordered. The segment covering 7–27 (SDEEIDNISDDELQSGDEIEV) has biased composition (acidic residues). Residues 38-290 (YILGNEIGRG…FEQCLIHPWV (253 aa)) form the Protein kinase domain. Residues 44 to 52 (IGRGAFSIV) and Lys-67 contribute to the ATP site. The Proton acceptor role is filled by Asp-158.

The protein belongs to the protein kinase superfamily. CAMK Ser/Thr protein kinase family. CaMK subfamily.

It catalyses the reaction L-seryl-[myosin light chain] + ATP = O-phospho-L-seryl-[myosin light chain] + ADP + H(+). The catalysed reaction is L-threonyl-[myosin light chain] + ATP = O-phospho-L-threonyl-[myosin light chain] + ADP + H(+). Its activity is regulated as follows. Does not have a calmodulin-binding domain. Functionally, may phosphorylate a specific serine in the N-terminus of a myosin light chain. The chain is Probable myosin light chain kinase DDB_G0282429 from Dictyostelium discoideum (Social amoeba).